The sequence spans 1376 residues: DNA-directed RNA polymerase subunit beta (1376 aa).

Over residues 1357-1368 (NSKTGRQTNPGT) the composition is skewed to polar residues. The interval 1357-1376 (NSKTGRQTNPGTRENLPAAE) is disordered.

It belongs to the RNA polymerase beta chain family. The RNAP catalytic core consists of 2 alpha, 1 beta, 1 beta' and 1 omega subunit. When a sigma factor is associated with the core the holoenzyme is formed, which can initiate transcription.

The enzyme catalyses RNA(n) + a ribonucleoside 5'-triphosphate = RNA(n+1) + diphosphate. In terms of biological role, DNA-dependent RNA polymerase catalyzes the transcription of DNA into RNA using the four ribonucleoside triphosphates as substrates. In Azorhizobium caulinodans (strain ATCC 43989 / DSM 5975 / JCM 20966 / LMG 6465 / NBRC 14845 / NCIMB 13405 / ORS 571), this protein is DNA-directed RNA polymerase subunit beta.